Reading from the N-terminus, the 112-residue chain is Photosystem II reaction center Psb28 protein (112 aa).

The protein belongs to the Psb28 family. As to quaternary structure, part of the photosystem II complex.

The protein resides in the plastid. It localises to the cyanelle thylakoid membrane. The sequence is that of Photosystem II reaction center Psb28 protein from Cyanophora paradoxa.